The following is a 22-amino-acid chain: Mu-conotoxin SxIIIC (22 aa).

Cystine bridges form between Cys3-Cys15, Cys4-Cys21, and Cys10-Cys22. At Cys22 the chain carries Cysteine amide.

This sequence belongs to the conotoxin M superfamily. Expressed by the venom duct.

The protein localises to the secreted. Functionally, mu-conotoxins block voltage-gated sodium channels (Nav). This toxin potently inhibits hNav1.4/SCN4A (IC(50)=15.11 nM). It also displays lower activities on other human subtypes (Nav1.1/SCN1A; IC(50)=132 nM, Nav1.2/SCN2A; IC(50)=363.8, Nav1.3/SCN3A; IC(50)=89.4, Nav1.6/SCN3A; IC(50)=124.9, Nav1.7/SCN7A; IC(50)=152.2). At Nav1.7/SCN9A, it does not elicit change in channel voltage-dependence of fast inactivation or activation, suggesting it acts as a pore blocker. Interestingly, it blocks current inhibition in an irreversible manner (tested during 35 minutes). This chain is Mu-conotoxin SxIIIC, found in Conus striolatus (Cone snail).